A 417-amino-acid polypeptide reads, in one-letter code: MSGFKSDFLRTLSERGFIHQISDESGLDELLAKETVTAYIGFDPTAPSLHAGGLIQIMMLYWLQQTGHKPVALMGGGTGMVGDPSFKDEARKLMTEDTIAENMASIKRVFANYLTFGDGANDALMVNNGEWLRNINYLEFLRDVGRHFSVNRMLSFDSVKLRLDREQSLSFLEFNYMILQAYDFVELNKRYGLRLQMGGSDQWGNIVNGIDLGHRMGTPQLYALTSPLLTTASGQKMGKSLGGAIWLNADMLSAYDFWQYWRNTEDADVERFLKLYTTLPLDEIARLAELGGAEINEAKKILATEVTAMLHGRDAAEEAAETARKTFEDGELSENLPTVGVHKATLNDGIGVLALMVLAELCTTNGEARRHVEGGAVRINDEPVSDPRMVVNAAALNDQGLIKLSLGKKRHVLIRPA.

An L-tyrosine-binding site is contributed by tyrosine 39. Positions 44–53 match the 'HIGH' region motif; the sequence is PTAPSLHAGG. L-tyrosine is bound by residues tyrosine 176 and glutamine 180. The 'KMSKS' region motif lies at 236-240; it reads KMGKS. Lysine 239 contacts ATP. The 68-residue stretch at 350–417 folds into the S4 RNA-binding domain; sequence IGVLALMVLA…KKRHVLIRPA (68 aa).

Belongs to the class-I aminoacyl-tRNA synthetase family. TyrS type 1 subfamily. Homodimer.

It is found in the cytoplasm. The enzyme catalyses tRNA(Tyr) + L-tyrosine + ATP = L-tyrosyl-tRNA(Tyr) + AMP + diphosphate + H(+). Catalyzes the attachment of tyrosine to tRNA(Tyr) in a two-step reaction: tyrosine is first activated by ATP to form Tyr-AMP and then transferred to the acceptor end of tRNA(Tyr). The sequence is that of Tyrosine--tRNA ligase from Brucella abortus (strain 2308).